Here is a 196-residue protein sequence, read N- to C-terminus: Peroxiredoxin TSA1-B (196 aa).

Residues 3–161 (PVVQQPAPSF…SLRLLEAFQF (159 aa)) form the Thioredoxin domain. Substrate is bound at residue 45–47 (TFV). Cys-48 acts as the Cysteine sulfenic acid (-SOH) intermediate in catalysis. Arg-124 is a binding site for substrate. A disordered region spans residues 173-196 (WHPGDETIKPSPEASKEYFNKVNK). Basic and acidic residues predominate over residues 175 to 196 (PGDETIKPSPEASKEYFNKVNK).

The protein belongs to the peroxiredoxin family. AhpC/Prx1 subfamily. As to quaternary structure, homodimer; disulfide-linked, upon oxidation.

The protein localises to the cell surface. It is found in the nucleus. It localises to the cytoplasm. It carries out the reaction a hydroperoxide + [thioredoxin]-dithiol = an alcohol + [thioredoxin]-disulfide + H2O. In terms of biological role, thiol-specific peroxidase that catalyzes the reduction of hydrogen peroxide and organic hydroperoxides to water and alcohols, respectively. Plays a role in cell protection against oxidative stress by detoxifying peroxides and as sensor of hydrogen peroxide-mediated signaling events. Also involved in the correct composition of the hyphal cell wall. In Candida albicans (strain SC5314 / ATCC MYA-2876) (Yeast), this protein is Peroxiredoxin TSA1-B.